The chain runs to 512 residues: Kynurenine 3-monooxygenase (512 aa).

This sequence belongs to the aromatic-ring hydroxylase family. KMO subfamily. Requires FAD as cofactor.

It is found in the mitochondrion outer membrane. The enzyme catalyses L-kynurenine + NADPH + O2 + H(+) = 3-hydroxy-L-kynurenine + NADP(+) + H2O. It functions in the pathway cofactor biosynthesis; NAD(+) biosynthesis; quinolinate from L-kynurenine: step 1/3. In terms of biological role, catalyzes the hydroxylation of L-kynurenine (L-Kyn) to form 3-hydroxy-L-kynurenine (L-3OHKyn). Required for synthesis of quinolinic acid. The polypeptide is Kynurenine 3-monooxygenase (nic-3) (Neurospora crassa (strain ATCC 24698 / 74-OR23-1A / CBS 708.71 / DSM 1257 / FGSC 987)).